A 481-amino-acid chain; its full sequence is UDP-N-acetylmuramate--L-alanine ligase (481 aa).

122-128 serves as a coordination point for ATP; sequence GVHGKTT.

It belongs to the MurCDEF family.

It is found in the cytoplasm. The enzyme catalyses UDP-N-acetyl-alpha-D-muramate + L-alanine + ATP = UDP-N-acetyl-alpha-D-muramoyl-L-alanine + ADP + phosphate + H(+). It participates in cell wall biogenesis; peptidoglycan biosynthesis. Its function is as follows. Cell wall formation. The chain is UDP-N-acetylmuramate--L-alanine ligase from Treponema pallidum (strain Nichols).